The sequence spans 681 residues: Hydroxyproline O-galactosyltransferase GALT6 (681 aa).

Residues 1-28 are Cytoplasmic-facing; the sequence is MRKPKLSKLERLEKFDIFVSLSKQRSVQ. A helical; Signal-anchor for type II membrane protein transmembrane segment spans residues 29-49; that stretch reads ILMAVGLLYMLLITFEIPFVF. Topologically, residues 50–681 are lumenal; that stretch reads KTGLSSLSQD…TGKPQCCNMR (632 aa). The segment at 57 to 80 is disordered; it reads SQDPLTRPEKHNSQRELQERRAPT. The span at 62–78 shows a compositional bias: basic and acidic residues; that stretch reads TRPEKHNSQRELQERRA. Positions 187–401 constitute a Galectin domain; it reads NIMELPCGLT…DIDVHSVFAG (215 aa). N-linked (GlcNAc...) asparagine glycosylation is present at Asn629.

It belongs to the glycosyltransferase 31 family. Mn(2+) is required as a cofactor. In terms of tissue distribution, expressed in junveile leaves and stems, and at lower levels in cauline leaves and siliques.

It localises to the golgi apparatus membrane. The protein operates within protein modification; protein glycosylation. Possesses hydroxyproline O-galactosyltransferase activity. Transfers galactose from UDP-galactose to hydroxyproline residues in the arabinogalactan proteins (AGPs). Is specific for AGPs containing non-contiguous peptidyl hydroxyproline residues. Utilizes UDP-galactose solely as sugar donor. The addition of galactose onto the peptidyl hydroxyproline residues in AGP core proteins represents the first committed step in arabinogalactan polysaccharide addition. AGP glycans play essential roles in both vegetative and reproductive plant growth. This is Hydroxyproline O-galactosyltransferase GALT6 from Arabidopsis thaliana (Mouse-ear cress).